Consider the following 474-residue polypeptide: Gamma-aminobutyric acid receptor subunit gamma-2 (474 aa).

The signal sequence occupies residues 1–38; sequence MSSPNTWSIGSSVYSPVFSQKMTLWILLLLSLYPGFTS. The Extracellular portion of the chain corresponds to 39 to 274; it reads QKSDDDYEDY…FDLSRRMGYF (236 aa). Residues Asn51 and Asn128 are each glycosylated (N-linked (GlcNAc...) asparagine). Cys189 and Cys203 are joined by a disulfide. Residue Asn246 is glycosylated (N-linked (GlcNAc...) asparagine). Residues 275 to 295 form a helical membrane-spanning segment; it reads TIQTYIPCTLIVVLSWVSFWI. At 296 to 301 the chain is on the cytoplasmic side; sequence NKDAVP. A helical membrane pass occupies residues 302 to 321; the sequence is ARTSLGITTVLTMTTLSTIA. Over 322–333 the chain is Extracellular; that stretch reads RKSLPKVSYVTA. A helical membrane pass occupies residues 334 to 358; sequence MDLFVSVCFIFVFSALVEYGTLHYF. The Cytoplasmic segment spans residues 359–450; that stretch reads VSNRKPSKDK…IHIRIAKMDS (92 aa). Ser381 carries the post-translational modification Phosphoserine; by PKC. A helical transmembrane segment spans residues 451–472; the sequence is YARIFFPTAFCLFNLVYWVSYL. At 473–474 the chain is on the extracellular side; the sequence is YL.

The protein belongs to the ligand-gated ion channel (TC 1.A.9) family. Gamma-aminobutyric acid receptor (TC 1.A.9.5) subfamily. GABRG2 sub-subfamily. Heteropentamer, formed by a combination of alpha (GABRA1-6), beta (GABRB1-3), gamma (GABRG1-3), delta (GABRD), epsilon (GABRE), rho (GABRR1-3), pi (GABRP) and theta (GABRQ) chains, each subunit exhibiting distinct physiological and pharmacological properties. Interacts with GABARAP. Interacts with KIF21B. Identified in a complex of 720 kDa composed of LHFPL4, NLGN2, GABRA1, GABRB2, GABRG2 and GABRB3. Interacts with LHFPL4. Interacts with SHISA7; interaction leads to the regulation of GABA(A) receptor trafficking, channel deactivation kinetics and pharmacology. In terms of processing, glycosylated. Palmitoylated by ZDHHC3/GODZ; required for the accumulation of GABA(A) receptors at the postsynaptic membrane of inhibitory GABAergic synapses. Expressed in brain neurons (at protein level).

The protein localises to the postsynaptic cell membrane. It is found in the cell membrane. It localises to the cell projection. The protein resides in the dendrite. Its subcellular location is the cytoplasmic vesicle membrane. The enzyme catalyses chloride(in) = chloride(out). Allosterically activated by benzodiazepines. Activated by pentobarbital. Inhibited by the antagonist bicuculline. Inhibited by zinc ions. Potentiated by histamine. In terms of biological role, gamma subunit of the heteropentameric ligand-gated chloride channel gated by gamma-aminobutyric acid (GABA), a major inhibitory neurotransmitter in the brain. GABA-gated chloride channels, also named GABA(A) receptors (GABAAR), consist of five subunits arranged around a central pore and contain GABA active binding site(s) located at the alpha and beta subunit interface(s). When activated by GABA, GABAARs selectively allow the flow of chloride anions across the cell membrane down their electrochemical gradient. Gamma-2/GABRG2-containing GABAARs are found at both synaptic and extrasynaptic sites. Chloride influx into the postsynaptic neuron following GABAAR opening decreases the neuron ability to generate a new action potential, thereby reducing nerve transmission. GABAARs containing alpha-1 and beta-2 or -3 subunits exhibit synaptogenic activity; the gamma-2 subunit being necessary but not sufficient to induce rapid synaptic contacts formation. Extrasynaptic gamma-2-containing receptors contribute to the tonic GABAergic inhibition. GABAARs function also as histamine receptor where histamine binds at the interface of two neighboring beta subunits and potentiates GABA response in a gamma-2 subunit-controlled manner. The polypeptide is Gamma-aminobutyric acid receptor subunit gamma-2 (Mus musculus (Mouse)).